Here is a 266-residue protein sequence, read N- to C-terminus: Dihydropteroate synthase (266 aa).

Residues 12-260 form the Pterin-binding domain; sequence AAIMGILNVT…DVKANQDIVA (249 aa). Asparagine 19 is a Mg(2+) binding site. (7,8-dihydropterin-6-yl)methyl diphosphate contacts are provided by residues threonine 59, aspartate 93, asparagine 112, aspartate 176, lysine 212, and 248–250; that span reads RVH.

This sequence belongs to the DHPS family. As to quaternary structure, homodimer or homotrimer. Mg(2+) serves as cofactor.

It carries out the reaction (7,8-dihydropterin-6-yl)methyl diphosphate + 4-aminobenzoate = 7,8-dihydropteroate + diphosphate. The protein operates within cofactor biosynthesis; tetrahydrofolate biosynthesis; 7,8-dihydrofolate from 2-amino-4-hydroxy-6-hydroxymethyl-7,8-dihydropteridine diphosphate and 4-aminobenzoate: step 1/2. Catalyzes the condensation of para-aminobenzoate (pABA) with 6-hydroxymethyl-7,8-dihydropterin diphosphate (DHPt-PP) to form 7,8-dihydropteroate (H2Pte), the immediate precursor of folate derivatives. This Streptococcus pyogenes serotype M6 (strain ATCC BAA-946 / MGAS10394) protein is Dihydropteroate synthase (folP).